Here is an 86-residue protein sequence, read N- to C-terminus: Neuropeptide-like 3 (86 aa).

Residues 1–16 (MFKLCVFVALLSLAAA) form the signal peptide. 2 propeptides span residues 17–50 (APAP…VAPQ) and 63–75 (AITQ…LLIK). I85 bears the Isoleucine amide mark.

The protein localises to the secreted. The chain is Neuropeptide-like 3 (Nplp3) from Drosophila yakuba (Fruit fly).